The chain runs to 776 residues: Homoaconitase, mitochondrial (776 aa).

The transit peptide at 1–38 (MQSRLVSQSGLGRRWAVLRCALSKTYQRRTLTSTRRQF) directs the protein to the mitochondrion. 3 residues coordinate [4Fe-4S] cluster: Cys394, Cys463, and Cys466.

Belongs to the aconitase/IPM isomerase family. [4Fe-4S] cluster serves as cofactor.

It localises to the mitochondrion. It carries out the reaction (2R,3S)-homoisocitrate = cis-homoaconitate + H2O. Its pathway is amino-acid biosynthesis; L-lysine biosynthesis via AAA pathway; L-alpha-aminoadipate from 2-oxoglutarate: step 3/5. Catalyzes the reversible hydration of cis-homoaconitate to (2R,3S)-homoisocitrate, a step in the alpha-aminoadipate pathway for lysine biosynthesis. This is Homoaconitase, mitochondrial (lys4) from Emericella nidulans (strain FGSC A4 / ATCC 38163 / CBS 112.46 / NRRL 194 / M139) (Aspergillus nidulans).